Here is a 1898-residue protein sequence, read N- to C-terminus: Receptor-type tyrosine-protein phosphatase F (1898 aa).

Positions 1–29 (MAPEPAPGRRMVPLVPALVMLGLMAGAHG) are cleaved as a signal peptide. The Extracellular segment spans residues 30-1254 (DSKPVFVKVP…QQQEEPEMLW (1225 aa)). 3 consecutive Ig-like C2-type domains span residues 33 to 123 (PVFV…AKLS), 135 to 224 (PTID…ANLY), and 232 to 314 (PRFS…AQVT). Residues cysteine 54 and cysteine 107 are joined by a disulfide bond. 68–77 (KKGKKVSSQR) serves as a coordination point for heparin. N-linked (GlcNAc...) asparagine glycosylation occurs at asparagine 117. Cysteine 156 and cysteine 207 are joined by a disulfide. N-linked (GlcNAc...) asparagine glycosylation is found at asparagine 250 and asparagine 295. Cysteines 253 and 298 form a disulfide. Fibronectin type-III domains lie at 321–411 (PPID…TGEQ), 416–510 (PPRR…TQQG), 514–604 (QPAD…TAQS), 609–706 (PPQK…TDED), 711–810 (PPRK…TTGA), 811–904 (VPGR…TPED), 909–1001 (FPQN…TMPV), and 1005–1089 (FAKN…TAPD). A disordered region spans residues 693–712 (GPESSPVLVRTDEDVPSGPP). Asparagine 721 carries an N-linked (GlcNAc...) asparagine glycan. N-linked (GlcNAc...) asparagine glycosylation is found at asparagine 941, asparagine 957, and asparagine 960. Residues 1255–1275 (VTGPVLAVILIILIVIAILLF) traverse the membrane as a helical segment. The Cytoplasmic segment spans residues 1276-1898 (KRKRTHSPSS…YLGSFDHYAT (623 aa)). The residue at position 1296 (serine 1296) is a Phosphoserine. Tyrosine-protein phosphatase domains follow at residues 1343–1598 (FSQE…LLEA) and 1630–1889 (MELE…ALEY). Substrate is bound by residues aspartate 1507, 1539–1545 (CSAGVGR), and glutamine 1583. Residue cysteine 1539 is the Phosphocysteine intermediate of the active site. Cysteine 1830 (phosphocysteine intermediate) is an active-site residue.

This sequence belongs to the protein-tyrosine phosphatase family. Receptor class 2A subfamily. As to quaternary structure, interacts with GRIP1. Interacts with PPFIA1, PPFIA2 and PPFIA3. Interacts with PTPRF. As to expression, expressed in the cell of the T lineage but not in cells of any other hemopoietic lineage.

It is found in the membrane. The enzyme catalyses O-phospho-L-tyrosyl-[protein] + H2O = L-tyrosyl-[protein] + phosphate. Its function is as follows. Possible cell adhesion receptor. It possesses an intrinsic protein tyrosine phosphatase activity (PTPase) and dephosphorylates EPHA2 regulating its activity. This chain is Receptor-type tyrosine-protein phosphatase F (Ptprf), found in Mus musculus (Mouse).